The chain runs to 4134 residues: DNA-dependent protein kinase catalytic subunit (4134 aa).

HEAT repeat units lie at residues 900–937 (VIYLDVFLPRVTDLALSASDRQTKIAACELLHSIVAYM), 1000–1036 (QDTVTFLEAILSGIVDPVDSTLRDFCGQCVREFLKWS), and 1050–1085 (ANTKSLFKRLYSLALHPSAFKRLGAALAFNSIYREF). TPR repeat units lie at residues 1265–1305 (YNTF…HDIH) and 1722–1755 (PMSSDEFPKGTLKHNNYVDCTKKFLDALELSQSP). Serine 2055 is subject to Phosphoserine; by autocatalysis. One copy of the TPR 3 repeat lies at 2207–2240 (DEILANRLLEFLMKNAFHQKRAVFRHNLEIIKTV). Threonine 2609 is subject to Phosphothreonine; by autocatalysis. Residues 2611–2629 (ASQSTNRNSSQERSLSISG) are compositionally biased toward polar residues. The tract at residues 2611 to 2631 (ASQSTNRNSSQERSLSISGSV) is disordered. Serine 2612 carries the phosphoserine; by autocatalysis modification. Residues threonine 2638 and threonine 2647 each carry the phosphothreonine; by autocatalysis modification. The region spanning 2880 to 3545 (NVSTSCLASL…IYPFTISSES (666 aa)) is the FAT domain. One can recognise a PI3K/PI4K catalytic domain in the interval 3728–4059 (FDERIMVLES…VSYVKRKLTG (332 aa)). The tract at residues 3734–3740 (VLESLRK) is G-loop. The interval 3925–3933 (GIGDRHLSN) is catalytic loop. The interval 3945–3970 (GIDFGHAFGSATQFLPVPELMPFRLT) is activation loop. Residues 4102 to 4134 (DRLSEETQVRCLIDQATDPNLLGRVWEGWEPWM) form the FATC domain.

This sequence belongs to the PI3/PI4-kinase family. In terms of assembly, DNA-PK is a heterotrimer of PRKDC and the Ku dimer (composed of XRCC6/Ku70 and XRCC5/Ku86). Component of the core long-range non-homologous end joining (NHEJ) complex (also named DNA-PK complex) composed of PRKDC, LIG4, XRCC4, XRCC6/Ku70, XRCC5/Ku86 and NHEJ1/XLF. Additional component of the NHEJ complex includes PAXX. Following autophosphorylation, PRKDC dissociates from DNA. In terms of processing, autophosphorylated at two clusters, the T2609 cluster and the S2056 cluster. Autophosphorylated on Ser-2055, Thr-2609, Thr-2638 and Thr-2647. Ser-2055 and Thr-2609 are DNA damage-inducible phosphorylation sites (inducible with ionizing radiation, IR) dephosphorylated by PPP5C. Autophosphorylation induces a conformational change that leads to remodeling of the DNA-PK complex, requisite for efficient end processing and DNA repair. Autophosphorylation in trans within DNA-PK complexes loaded on DNA ends leads to the dissociation of PRKDC from DNA and the transition into the short-range NHEJ complex. Autophosphorylation of the T2609 cluster is required for hematopoietic development and protein synthesis in erythrocytes precursors.

Its subcellular location is the nucleus. It is found in the nucleolus. It catalyses the reaction L-seryl-[protein] + ATP = O-phospho-L-seryl-[protein] + ADP + H(+). It carries out the reaction L-threonyl-[protein] + ATP = O-phospho-L-threonyl-[protein] + ADP + H(+). Its function is as follows. Serine/threonine-protein kinase that acts as a molecular sensor for DNA damage. Involved in DNA nonhomologous end joining (NHEJ) required for double-strand break (DSB) repair and V(D)J recombination. Must be bound to DNA to express its catalytic properties. Promotes processing of hairpin DNA structures in V(D)J recombination by activation of the hairpin endonuclease artemis (DCLRE1C). Recruited by XRCC5 and XRCC6 to DNA ends and is required to (1) protect and align broken ends of DNA, thereby preventing their degradation, (2) and sequester the DSB for repair by NHEJ. Acts as a scaffold protein to aid the localization of DNA repair proteins to the site of damage. The assembly of the DNA-PK complex at DNA ends is also required for the NHEJ ligation step. Found at the ends of chromosomes, suggesting a further role in the maintenance of telomeric stability and the prevention of chromosomal end fusion. As part of the DNA-PK complex, involved in the early steps of ribosome assembly by promoting the processing of precursor rRNA into mature 18S rRNA in the small-subunit processome. Recognizes the substrate consensus sequence [ST]-Q. Phosphorylates 'Ser-139' of histone variant H2AX, thereby regulating DNA damage response mechanism. The protein is DNA-dependent protein kinase catalytic subunit (PRKDC) of Gallus gallus (Chicken).